The primary structure comprises 215 residues: Peptide methionine sulfoxide reductase MsrA (215 aa).

Residue cysteine 58 is part of the active site.

This sequence belongs to the MsrA Met sulfoxide reductase family.

It carries out the reaction L-methionyl-[protein] + [thioredoxin]-disulfide + H2O = L-methionyl-(S)-S-oxide-[protein] + [thioredoxin]-dithiol. It catalyses the reaction [thioredoxin]-disulfide + L-methionine + H2O = L-methionine (S)-S-oxide + [thioredoxin]-dithiol. In terms of biological role, has an important function as a repair enzyme for proteins that have been inactivated by oxidation. Catalyzes the reversible oxidation-reduction of methionine sulfoxide in proteins to methionine. The sequence is that of Peptide methionine sulfoxide reductase MsrA from Pseudomonas aeruginosa (strain LESB58).